A 505-amino-acid polypeptide reads, in one-letter code: Probable cytosol aminopeptidase (505 aa).

Mn(2+) contacts are provided by K269 and D274. Residue K281 is part of the active site. Mn(2+) is bound by residues D292, D351, and E353. Residue R355 is part of the active site.

Belongs to the peptidase M17 family. The cofactor is Mn(2+).

Its subcellular location is the cytoplasm. It carries out the reaction Release of an N-terminal amino acid, Xaa-|-Yaa-, in which Xaa is preferably Leu, but may be other amino acids including Pro although not Arg or Lys, and Yaa may be Pro. Amino acid amides and methyl esters are also readily hydrolyzed, but rates on arylamides are exceedingly low.. The enzyme catalyses Release of an N-terminal amino acid, preferentially leucine, but not glutamic or aspartic acids.. Presumably involved in the processing and regular turnover of intracellular proteins. Catalyzes the removal of unsubstituted N-terminal amino acids from various peptides. The protein is Probable cytosol aminopeptidase of Rhodococcus opacus (strain B4).